A 499-amino-acid polypeptide reads, in one-letter code: 3-octaprenyl-4-hydroxybenzoate carboxy-lyase (499 aa).

Asn-173 is a binding site for Mn(2+). Prenylated FMN is bound by residues 176 to 178 (IYR), 190 to 192 (RWL), and 195 to 196 (RG). Position 239 (Glu-239) interacts with Mn(2+). Residue Asp-288 is the Proton donor of the active site.

The protein belongs to the UbiD family. Homohexamer. It depends on prenylated FMN as a cofactor. Requires Mn(2+) as cofactor.

Its subcellular location is the cell membrane. It carries out the reaction a 4-hydroxy-3-(all-trans-polyprenyl)benzoate + H(+) = a 2-(all-trans-polyprenyl)phenol + CO2. Its pathway is cofactor biosynthesis; ubiquinone biosynthesis. Catalyzes the decarboxylation of 3-octaprenyl-4-hydroxy benzoate to 2-octaprenylphenol, an intermediate step in ubiquinone biosynthesis. In Blochmanniella floridana, this protein is 3-octaprenyl-4-hydroxybenzoate carboxy-lyase.